Here is a 781-residue protein sequence, read N- to C-terminus: Aconitate hydratase, mitochondrial (781 aa).

The transit peptide at 1–27 directs the protein to the mitochondrion; it reads MAPYSLLVTRLQKALGVRQYHVASVLC. Glutamine 28 is modified (pyrrolidone carboxylic acid). Lysine 31 is subject to N6-succinyllysine. N6-acetyllysine; alternate is present on lysine 50. Lysine 50 is subject to N6-succinyllysine; alternate. Glutamine 99 is a substrate binding site. An N6-acetyllysine; alternate mark is found at lysine 138 and lysine 144. Lysine 138 and lysine 144 each carry N6-succinyllysine; alternate. 192-194 provides a ligand contact to substrate; the sequence is DSH. Lysine 233 carries the N6-acetyllysine; alternate modification. Lysine 233 bears the N6-succinyllysine; alternate mark. Cysteine 385 lines the [4Fe-4S] cluster pocket. Lysine 411 is modified (N6-succinyllysine). Positions 448 and 451 each coordinate [4Fe-4S] cluster. 2 residues coordinate substrate: arginine 474 and arginine 479. N6-acetyllysine; alternate occurs at positions 517 and 523. Residues lysine 517 and lysine 523 each carry the N6-succinyllysine; alternate modification. Positions 524-537 are enriched in basic and acidic residues; sequence LEAPDADELPRAEF. The segment at 524-561 is disordered; it reads LEAPDADELPRAEFDPGQDTYQHPPKDSSGQRVDVSPT. Position 549 is an N6-succinyllysine (lysine 549). The span at 551-561 shows a compositional bias: polar residues; it reads SSGQRVDVSPT. Serine 559 carries the phosphoserine modification. Residue lysine 573 is modified to N6-acetyllysine; alternate. Residue lysine 573 is modified to N6-succinyllysine; alternate. Lysine 577 and lysine 591 each carry N6-succinyllysine. An N6-acetyllysine; alternate modification is found at lysine 605. At lysine 605 the chain carries N6-succinyllysine; alternate. Arginine 607 serves as a coordination point for substrate. The residue at position 628 (lysine 628) is an N6-succinyllysine. Serine 670 carries the phosphoserine modification. 670-671 lines the substrate pocket; the sequence is SR. Lysine 689 is subject to N6-succinyllysine. N6-acetyllysine; alternate occurs at positions 723 and 730. An N6-succinyllysine; alternate mark is found at lysine 723 and lysine 730. N6-acetyllysine occurs at positions 736, 739, and 743.

Belongs to the aconitase/IPM isomerase family. Monomer. It depends on [4Fe-4S] cluster as a cofactor. Forms covalent cross-links mediated by transglutaminase TGM2, between a glutamine and the epsilon-amino group of a lysine residue, forming homopolymers and heteropolymers.

Its subcellular location is the mitochondrion. It carries out the reaction citrate = D-threo-isocitrate. It participates in carbohydrate metabolism; tricarboxylic acid cycle; isocitrate from oxaloacetate: step 2/2. Its function is as follows. Catalyzes the isomerization of citrate to isocitrate via cis-aconitate. The polypeptide is Aconitate hydratase, mitochondrial (ACO2) (Sus scrofa (Pig)).